The chain runs to 607 residues: MAHEVDLESFKELERDIILRVLYRDQTVQSTEEERVRKLKSHLQHLRWKGAKSSSQEYKEKCCARCQRALGLLLNRGAVCQGCSHRVCSECRVFLRRTRAWKCTVCFEDRNVKIKTGEWFFEERARKFPTAGRRETAGAKLLQSYQRLSKISVVPPTPPPFSESQCSSSSRLQELGHFRGFNKSVENLFLSVTTQMRKLSKSQNDMTSEKHLLAMDPRQCVGHTERRSQSDTAVNVTSRKASTPDILKAFHQEDPKHPPDPVLKQDTPPSSPTHSAVFSGGLRHGSLISINSTCTEMGNFDNANVTGEIEFAIHYCVKSCSLEICIKTCKNLAYGEEKKRKCNPYVKTYLLPDRSSQGKRKTRVQKNTLDPTFEETLKYQVDPGQLMTRRLQVSVWHLGTLARRVFLGEVILPLAMWDFKDSTAQNARWYPLRAKAEKYEENIPQNNGELAVRAKLVLPAGPRKPQEAQEGQLALNGQLCLVVLGAKNLPVRSDGTLNSFVKGCLTLPNQQKLRVKSPVLKKQACPQWKHSFVFNGVSSSQLRQSTLELTVWDQAIFGMNDRLLGEARLGSKGGAAGCPDSGSQSKLQWHRVLSSPNLWTDMTLVLH.

The RabBD domain maps to 4–123; it reads EVDLESFKEL…IKTGEWFFEE (120 aa). The disordered stretch occupies residues 221 to 279; it reads VGHTERRSQSDTAVNVTSRKASTPDILKAFHQEDPKHPPDPVLKQDTPPSSPTHSAVFS. Residues 230 to 241 show a composition bias toward polar residues; the sequence is SDTAVNVTSRKA. Residues 248 to 259 are compositionally biased toward basic and acidic residues; the sequence is KAFHQEDPKHPP. C2 domains follow at residues 305–430 and 458–590; these read VTGE…ARWY and LPAG…LQWH.

In terms of assembly, monomer. Binds NRXN1. Binds RAB27A that has been activated by GTP-binding via its N-terminus. Highly expressed in spleen and lung. Detected at lower levels in heart and testis.

It localises to the endomembrane system. May act as Rab effector protein and play a role in vesicle trafficking. Binds phospholipids in the presence of calcium ions. The sequence is that of Synaptotagmin-like protein 3 (Sytl3) from Mus musculus (Mouse).